A 61-amino-acid polypeptide reads, in one-letter code: Large ribosomal subunit protein bL32 (61 aa).

Residues 1-16 (MAVPKRKTSPSKRGMR) are compositionally biased toward basic residues. The interval 1-39 (MAVPKRKTSPSKRGMRRSADALKAPTYIEDKNSGELRRP) is disordered. A compositionally biased stretch (basic and acidic residues) spans 28–39 (IEDKNSGELRRP).

This sequence belongs to the bacterial ribosomal protein bL32 family.

The polypeptide is Large ribosomal subunit protein bL32 (Rhizobium meliloti (strain 1021) (Ensifer meliloti)).